The primary structure comprises 303 residues: MKVIFMGTPEFAVPTLKKLIIHHEVKAVFTQQPKAKGRGLYLAKSPIHQLAFEHQIPVYSPSTLRNDETINLINKVDADIIVVIAYGFIVPKAILEAKKYGCLNIHPSDLPRHRGAAPLQRTIIEGDLKSSVCIMRMDSGLDTGDILLKEDLNLEKRITLDELSNRCAHLGAELLIQTLANIDNIVPVKQSSNGVTYAHKLTKAEGKINWYESAYSIDCKIRGMNPWPGAYFSYNDKIIKILEAEYLNYNHHFIPGTVISNKLEIACGSGILRVTKLQQESKKALNIEAFLRGTNILKDTILK.

S108 to P111 contributes to the (6S)-5,6,7,8-tetrahydrofolate binding site.

This sequence belongs to the Fmt family.

The enzyme catalyses L-methionyl-tRNA(fMet) + (6R)-10-formyltetrahydrofolate = N-formyl-L-methionyl-tRNA(fMet) + (6S)-5,6,7,8-tetrahydrofolate + H(+). Its function is as follows. Attaches a formyl group to the free amino group of methionyl-tRNA(fMet). The formyl group appears to play a dual role in the initiator identity of N-formylmethionyl-tRNA by promoting its recognition by IF2 and preventing the misappropriation of this tRNA by the elongation apparatus. In Rickettsia typhi (strain ATCC VR-144 / Wilmington), this protein is Methionyl-tRNA formyltransferase.